Here is a 418-residue protein sequence, read N- to C-terminus: Phospho-N-acetylmuramoyl-pentapeptide-transferase (418 aa).

The next 10 membrane-spanning stretches (helical) occupy residues 22–42 (YISF…VLIG), 72–92 (TPTM…LLLA), 95–115 (SNIY…LGLI), 135–155 (IIAQ…SPNI), 208–228 (AATW…VSNG), 244–264 (AIIG…GFAA), 277–297 (LTVF…HNAF), 302–322 (FMGD…AIII), 326–346 (LLLP…MIQV), and 395–415 (KIVV…VVTL).

It belongs to the glycosyltransferase 4 family. MraY subfamily. Requires Mg(2+) as cofactor.

Its subcellular location is the cell inner membrane. The enzyme catalyses UDP-N-acetyl-alpha-D-muramoyl-L-alanyl-gamma-D-glutamyl-meso-2,6-diaminopimeloyl-D-alanyl-D-alanine + di-trans,octa-cis-undecaprenyl phosphate = di-trans,octa-cis-undecaprenyl diphospho-N-acetyl-alpha-D-muramoyl-L-alanyl-D-glutamyl-meso-2,6-diaminopimeloyl-D-alanyl-D-alanine + UMP. The protein operates within cell wall biogenesis; peptidoglycan biosynthesis. In terms of biological role, catalyzes the initial step of the lipid cycle reactions in the biosynthesis of the cell wall peptidoglycan: transfers peptidoglycan precursor phospho-MurNAc-pentapeptide from UDP-MurNAc-pentapeptide onto the lipid carrier undecaprenyl phosphate, yielding undecaprenyl-pyrophosphoryl-MurNAc-pentapeptide, known as lipid I. This is Phospho-N-acetylmuramoyl-pentapeptide-transferase from Azobacteroides pseudotrichonymphae genomovar. CFP2.